The sequence spans 436 residues: Histidinol dehydrogenase (436 aa).

Positions 237, 259, and 262 each coordinate substrate. Residues glutamine 259 and histidine 262 each contribute to the Zn(2+) site. Residues glutamate 327 and histidine 328 each act as proton acceptor in the active site. Substrate-binding residues include histidine 328, aspartate 361, glutamate 415, and histidine 420. Aspartate 361 contributes to the Zn(2+) binding site. A Zn(2+)-binding site is contributed by histidine 420.

The protein belongs to the histidinol dehydrogenase family. The cofactor is Zn(2+).

It carries out the reaction L-histidinol + 2 NAD(+) + H2O = L-histidine + 2 NADH + 3 H(+). Its pathway is amino-acid biosynthesis; L-histidine biosynthesis; L-histidine from 5-phospho-alpha-D-ribose 1-diphosphate: step 9/9. Its function is as follows. Catalyzes the sequential NAD-dependent oxidations of L-histidinol to L-histidinaldehyde and then to L-histidine. In Helicobacter hepaticus (strain ATCC 51449 / 3B1), this protein is Histidinol dehydrogenase.